A 97-amino-acid chain; its full sequence is Aspartyl/glutamyl-tRNA(Asn/Gln) amidotransferase subunit C (97 aa).

Belongs to the GatC family. Heterotrimer of A, B and C subunits.

The catalysed reaction is L-glutamyl-tRNA(Gln) + L-glutamine + ATP + H2O = L-glutaminyl-tRNA(Gln) + L-glutamate + ADP + phosphate + H(+). It carries out the reaction L-aspartyl-tRNA(Asn) + L-glutamine + ATP + H2O = L-asparaginyl-tRNA(Asn) + L-glutamate + ADP + phosphate + 2 H(+). Allows the formation of correctly charged Asn-tRNA(Asn) or Gln-tRNA(Gln) through the transamidation of misacylated Asp-tRNA(Asn) or Glu-tRNA(Gln) in organisms which lack either or both of asparaginyl-tRNA or glutaminyl-tRNA synthetases. The reaction takes place in the presence of glutamine and ATP through an activated phospho-Asp-tRNA(Asn) or phospho-Glu-tRNA(Gln). This Roseiflexus sp. (strain RS-1) protein is Aspartyl/glutamyl-tRNA(Asn/Gln) amidotransferase subunit C.